Consider the following 697-residue polypeptide: Potassium channel KAT2 (697 aa).

Over 1 to 63 the chain is Cytoplasmic; the sequence is MSISCTRNFF…PFDPRFRGWE (63 aa). A helical membrane pass occupies residues 64-84; sequence MWLVILVIYSAWICPFEFAFI. Topologically, residues 85–91 are extracellular; the sequence is TYKKDAL. A helical membrane pass occupies residues 92 to 112; the sequence is FIIDNIVNGFFAIDIILTFFV. The Cytoplasmic segment spans residues 113–134; that stretch reads AYLDSHSYLLVDKPKKIAIRYL. Residues 135 to 155 form a helical membrane-spanning segment; it reads STWFAFDVCSTAPFQSLSLLF. The Extracellular segment spans residues 156-165; it reads KYNGSEIGFR. N-linked (GlcNAc...) asparagine glycosylation is present at Asn158. Residues 166 to 186 form a helical; Voltage-sensor membrane-spanning segment; that stretch reads VLSMLRLWRLRRVSSLFARLE. Topologically, residues 187–200 are cytoplasmic; the sequence is KDIRFNYFWTRCTK. A helical membrane pass occupies residues 201-221; sequence LISVTLFAVHCAGCFAYLIAD. Over 222 to 248 the chain is Extracellular; the sequence is QYHDPTKTWIGAVYPNFKETSVWSRYV. Positions 249–268 form an intramembrane region, pore-forming; that stretch reads TALYWSITTLTTTGYGDLHA. Over 269 to 272 the chain is Extracellular; sequence ENPR. The chain crosses the membrane as a helical span at residues 273-293; the sequence is EMLFFVFFMLFNLGFTSYLIG. Over 294-697 the chain is Cytoplasmic; sequence NMTNLVVHWT…HLYILINENS (404 aa). 377–496 contributes to the a nucleoside 3',5'-cyclic phosphate binding site; sequence LFHGVSRNFL…RVIMNNLFMK (120 aa). Residues 629 to 697 form the KHA domain; that stretch reads RVTIHLKSRD…HLYILINENS (69 aa).

This sequence belongs to the potassium channel family. Plant (TC 1.A.1.4) subfamily. In terms of assembly, the potassium channel is probably composed of a homo- or heterotetrameric complex of pore-forming subunits. May interact with KAT1. Interacts with SLAC1. As to expression, expressed in guard cells of hypocotyls, stems leaves and petioles. Detected also in the phloem of minor veins and in flower at a lower level.

The protein resides in the membrane. Highly selective inward-rectifying potassium channel. This voltage-dependent channel could mediate long-term potassium influx into guard cells leading to stomatal opening. Assuming opened or closed conformations in response to the voltage difference across the membrane, the channel is activated by hyperpolarization. The channel activity is enhanced upon external acidification. The sequence is that of Potassium channel KAT2 (KAT2) from Arabidopsis thaliana (Mouse-ear cress).